A 488-amino-acid chain; its full sequence is Ribulose bisphosphate carboxylase large chain (488 aa).

Substrate-binding residues include Asn127 and Thr177. Lys179 acts as the Proton acceptor in catalysis. Lys181 provides a ligand contact to substrate. Positions 205, 207, and 208 each coordinate Mg(2+). At Lys205 the chain carries N6-carboxylysine. Residue His297 is the Proton acceptor of the active site. Substrate is bound by residues Arg298, His330, and Ser382.

The protein belongs to the RuBisCO large chain family. Type I subfamily. Heterohexadecamer of 8 large chains and 8 small chains. Requires Mg(2+) as cofactor.

Its subcellular location is the plastid. It localises to the chloroplast. The enzyme catalyses 2 (2R)-3-phosphoglycerate + 2 H(+) = D-ribulose 1,5-bisphosphate + CO2 + H2O. It catalyses the reaction D-ribulose 1,5-bisphosphate + O2 = 2-phosphoglycolate + (2R)-3-phosphoglycerate + 2 H(+). RuBisCO catalyzes two reactions: the carboxylation of D-ribulose 1,5-bisphosphate, the primary event in carbon dioxide fixation, as well as the oxidative fragmentation of the pentose substrate in the photorespiration process. Both reactions occur simultaneously and in competition at the same active site. This is Ribulose bisphosphate carboxylase large chain from Antithamnion sp. (Red alga).